Here is a 766-residue protein sequence, read N- to C-terminus: Dipeptidyl peptidase 4 (766 aa).

Topologically, residues 1-6 are cytoplasmic; it reads MKTPWK. A helical; Signal-anchor for type II membrane protein membrane pass occupies residues 7–28; sequence VLLGLLGAAALVTIITVPVVLL. The Extracellular portion of the chain corresponds to 29 to 766; the sequence is NKGTDDATAD…HFIKQCFSLP (738 aa). 7 N-linked (GlcNAc...) asparagine glycosylation sites follow: asparagine 85, asparagine 92, asparagine 150, asparagine 219, asparagine 229, asparagine 281, and asparagine 321. Cystine bridges form between cysteine 328–cysteine 339, cysteine 385–cysteine 394, cysteine 444–cysteine 447, and cysteine 454–cysteine 472. N-linked (GlcNAc...) asparagine glycosylation occurs at asparagine 520. Serine 630 acts as the Charge relay system in catalysis. An intrachain disulfide couples cysteine 649 to cysteine 762. An N-linked (GlcNAc...) asparagine glycan is attached at asparagine 685. Active-site charge relay system residues include aspartate 708 and histidine 740.

Belongs to the peptidase S9B family. DPPIV subfamily. As to quaternary structure, monomer. Homodimer. Heterodimer with Seprase (FAP). Requires homodimerization for optimal dipeptidyl peptidase activity and T-cell costimulation. Found in a membrane raft complex, at least composed of BCL10, CARD11, DPP4 and IKBKB. Associates with collagen. Interacts with PTPRC; the interaction is enhanced in an interleukin-12-dependent manner in activated lymphocytes. Interacts (via extracellular domain) with ADA; does not inhibit its dipeptidyl peptidase activity. Interacts with CAV1 (via the N-terminus); the interaction is direct. Interacts (via cytoplasmic tail) with CARD11 (via PDZ domain); its homodimerization is necessary for interaction with CARD11. Interacts with IGF2R; the interaction is direct. Interacts with GPC3. Interacts with human coronavirus-EMC spike protein and acts as a receptor for this virus. (Microbial infection) Interacts with MERS coronavirus/MERS-CoV spike protein. The soluble form (Dipeptidyl peptidase 4 soluble form also named SDPP) derives from the membrane form (Dipeptidyl peptidase 4 membrane form also named MDPP) by proteolytic processing. In terms of processing, N- and O-Glycosylated. Post-translationally, phosphorylated. Mannose 6-phosphate residues in the carbohydrate moiety are necessary for interaction with IGF2R in activated T-cells. Mannose 6-phosphorylation is induced during T-cell activation. Expressed specifically in lymphatic vessels but not in blood vessels in the skin, small intestine, esophagus, ovary, breast and prostate glands. Not detected in lymphatic vessels in the lung, kidney, uterus, liver and stomach (at protein level). Expressed in the poorly differentiated crypt cells of the small intestine as well as in the mature villous cells. Expressed at very low levels in the colon.

It is found in the secreted. The protein resides in the cell membrane. The protein localises to the apical cell membrane. It localises to the cell projection. Its subcellular location is the invadopodium membrane. It is found in the lamellipodium membrane. The protein resides in the cell junction. The protein localises to the membrane raft. The enzyme catalyses Release of an N-terminal dipeptide, Xaa-Yaa-|-Zaa-, from a polypeptide, preferentially when Yaa is Pro, provided Zaa is neither Pro nor hydroxyproline.. Its activity is regulated as follows. Inhibited by GPC3 and diprotin A. Cell surface glycoprotein receptor involved in the costimulatory signal essential for T-cell receptor (TCR)-mediated T-cell activation. Acts as a positive regulator of T-cell coactivation, by binding at least ADA, CAV1, IGF2R, and PTPRC. Its binding to CAV1 and CARD11 induces T-cell proliferation and NF-kappa-B activation in a T-cell receptor/CD3-dependent manner. Its interaction with ADA also regulates lymphocyte-epithelial cell adhesion. In association with FAP is involved in the pericellular proteolysis of the extracellular matrix (ECM), the migration and invasion of endothelial cells into the ECM. May be involved in the promotion of lymphatic endothelial cells adhesion, migration and tube formation. When overexpressed, enhanced cell proliferation, a process inhibited by GPC3. Also acts as a serine exopeptidase with a dipeptidyl peptidase activity that regulates various physiological processes by cleaving peptides in the circulation, including many chemokines, mitogenic growth factors, neuropeptides and peptide hormones such as brain natriuretic peptide 32. Removes N-terminal dipeptides sequentially from polypeptides having unsubstituted N-termini provided that the penultimate residue is proline. Functionally, (Microbial infection) Acts as a receptor for human coronavirus MERS-CoV-2. The polypeptide is Dipeptidyl peptidase 4 (Homo sapiens (Human)).